Reading from the N-terminus, the 67-residue chain is Conotoxin LiC33 (67 aa).

Positions 1 to 22 (MRCVPVFIILLLLSPSAPSVDA) are cleaved as a signal peptide. The propeptide occupies 23–48 (HPKTKDDVPLASFHDDAKRTLQRLWI). Phe-63 bears the Phenylalanine amide mark. The propeptide occupies 65–67 (KGK).

Belongs to the conotoxin T superfamily. Contains 2 disulfide bonds that can be either 'C1-C3, C2-C4' or 'C1-C4, C2-C3', since these disulfide connectivities have been observed for conotoxins with cysteine framework V (for examples, see AC P0DQQ7 and AC P81755). Expressed by the venom duct.

The protein resides in the secreted. The polypeptide is Conotoxin LiC33 (Conus lividus (Livid cone)).